A 389-amino-acid polypeptide reads, in one-letter code: S-adenosylmethionine synthase (389 aa).

Histidine 17 serves as a coordination point for ATP. Aspartate 19 provides a ligand contact to Mg(2+). Glutamate 45 contributes to the K(+) binding site. Glutamate 58 and glutamine 101 together coordinate L-methionine. The interval 101 to 111 is flexible loop; it reads QSPDIAQGVTE. Residues 168–170, 234–235, aspartate 243, 249–250, alanine 266, and lysine 270 contribute to the ATP site; these read DSK, RF, and RK. Residue aspartate 243 coordinates L-methionine. An L-methionine-binding site is contributed by lysine 274.

The protein belongs to the AdoMet synthase family. Homotetramer; dimer of dimers. Mg(2+) is required as a cofactor. Requires K(+) as cofactor.

The protein resides in the cytoplasm. It carries out the reaction L-methionine + ATP + H2O = S-adenosyl-L-methionine + phosphate + diphosphate. It participates in amino-acid biosynthesis; S-adenosyl-L-methionine biosynthesis; S-adenosyl-L-methionine from L-methionine: step 1/1. In terms of biological role, catalyzes the formation of S-adenosylmethionine (AdoMet) from methionine and ATP. The overall synthetic reaction is composed of two sequential steps, AdoMet formation and the subsequent tripolyphosphate hydrolysis which occurs prior to release of AdoMet from the enzyme. This Geotalea uraniireducens (strain Rf4) (Geobacter uraniireducens) protein is S-adenosylmethionine synthase.